We begin with the raw amino-acid sequence, 708 residues long: Glycogen [starch] synthase isoform 1 (708 aa).

UDP is bound at residue Arg-20. Ser-159 is subject to Phosphoserine. His-193 and Arg-199 together coordinate UDP-alpha-D-glucose. Positions 280, 281, 283, 286, and 290 each coordinate alpha-D-glucose 6-phosphate. Arg-320 serves as a coordination point for UDP. Residue Arg-320 participates in UDP-alpha-D-glucose binding. Ser-363 is modified (phosphoserine). Position 500 (His-500) interacts with alpha-D-glucose 6-phosphate. The UDP-alpha-D-glucose site is built by Glu-509, Trp-511, and Gly-512. Residue Thr-514 participates in UDP binding. Residue Ser-560 is modified to Phosphoserine. Alpha-D-glucose 6-phosphate contacts are provided by Arg-583 and Arg-587. Ser-651 and Ser-655 each carry phosphoserine. Phosphoserine; by PKA occurs at positions 660 and 662. Positions 687-708 (STNGAIDNDDDDNDTSAYYEDN) are disordered. A compositionally biased stretch (acidic residues) spans 693-708 (DNDDDDNDTSAYYEDN).

This sequence belongs to the glycosyltransferase 3 family.

The enzyme catalyses [(1-&gt;4)-alpha-D-glucosyl](n) + UDP-alpha-D-glucose = [(1-&gt;4)-alpha-D-glucosyl](n+1) + UDP + H(+). The protein operates within glycan biosynthesis; glycogen biosynthesis. Allosteric activation by glucose-6-phosphate, and phosphorylation by a cAMP-dependent kinase. In terms of biological role, glycogen synthase participates in the glycogen biosynthetic process along with glycogenin and glycogen branching enzyme. Extends the primer composed of a few glucose units formed by glycogenin by adding new glucose units to it. In this context, glycogen synthase transfers the glycosyl residue from UDP-Glc to the non-reducing end of alpha-1,4-glucan. This is Glycogen [starch] synthase isoform 1 (GSY1) from Saccharomyces cerevisiae (strain ATCC 204508 / S288c) (Baker's yeast).